The primary structure comprises 121 residues: Basic phospholipase A2 homolog 2 (121 aa).

Cystine bridges form between C26-C115, C28-C44, C43-C95, C49-C121, C50-C88, C57-C81, and C75-C86. An important for membrane-damaging activities in eukaryotes and bacteria; heparin-binding region spans residues 105–117 (KKYRYHLKPLCKK).

The protein belongs to the phospholipase A2 family. Group II subfamily. K49 sub-subfamily. In terms of assembly, homodimer; non-covalently linked (probable alternative/compact dimer conformation in solution). In terms of tissue distribution, expressed by the venom gland.

The protein localises to the secreted. In terms of biological role, snake venom phospholipase A2 homolog that lacks enzymatic activity. Is myotoxic and displays edema-inducing activities in mouse paw. Also displays cytotoxic activity against myotubes. A model of myotoxic mechanism has been proposed: an apo Lys49-PLA2 is activated by the entrance of a hydrophobic molecule (e.g. fatty acid) at the hydrophobic channel of the protein leading to a reorientation of a monomer. This reorientation causes a transition between 'inactive' to 'active' states, causing alignment of C-terminal and membrane-docking sites (MDoS) side-by-side and putting the membrane-disruption sites (MDiS) in the same plane, exposed to solvent and in a symmetric position for both monomers. The MDoS region stabilizes the toxin on membrane by the interaction of charged residues with phospholipid head groups. Subsequently, the MDiS region destabilizes the membrane with penetration of hydrophobic residues. This insertion causes a disorganization of the membrane, allowing an uncontrolled influx of ions (i.e. calcium and sodium), and eventually triggering irreversible intracellular alterations and cell death. This Bothrops brazili (Brazil's lancehead) protein is Basic phospholipase A2 homolog 2.